We begin with the raw amino-acid sequence, 32 residues long: Photosystem II reaction center protein T (32 aa).

The helical transmembrane segment at 3-23 threads the bilayer; sequence SIAYVLIFACLIGLFFFAIFF.

The protein belongs to the PsbT family. In terms of assembly, PSII is composed of 1 copy each of membrane proteins PsbA, PsbB, PsbC, PsbD, PsbE, PsbF, PsbH, PsbI, PsbJ, PsbK, PsbL, PsbM, PsbT, PsbX, PsbY, PsbZ, Psb30/Ycf12, peripheral proteins PsbO, CyanoQ (PsbQ), PsbU, PsbV and a large number of cofactors. It forms dimeric complexes.

It localises to the cellular thylakoid membrane. Functionally, found at the monomer-monomer interface of the photosystem II (PS II) dimer, plays a role in assembly and dimerization of PSII. PSII is a light-driven water plastoquinone oxidoreductase, using light energy to abstract electrons from H(2)O, generating a proton gradient subsequently used for ATP formation. The protein is Photosystem II reaction center protein T of Cyanothece sp. (strain PCC 7425 / ATCC 29141).